Consider the following 379-residue polypeptide: uncharacterized protein (379 aa).

It belongs to the herpesviridae US22 family.

This is an uncharacterized protein from Human cytomegalovirus (strain AD169) (HHV-5).